The primary structure comprises 94 residues: Large ribosomal subunit protein bL27 (94 aa).

Residues 1–9 (MTLNNLQLF) constitute a propeptide that is removed on maturation. The interval 9–33 (FAHKKGGGSTSNGRDSQAKRLGAKA) is disordered.

This sequence belongs to the bacterial ribosomal protein bL27 family. The N-terminus is cleaved by ribosomal processing cysteine protease Prp.

The chain is Large ribosomal subunit protein bL27 from Streptococcus pneumoniae serotype 4 (strain ATCC BAA-334 / TIGR4).